A 120-amino-acid polypeptide reads, in one-letter code: MFVLSGYEYLLVFLIVCALLPVLALGASALLAPKRRGSLRRSTYESGMEPFGQAWIQFNIRYYMFALVFVIFDVETVFLYPWAVAFHRLGLLAFVEALIFIAILVVGLVYAWRKGALEWS.

Helical transmembrane passes span 10 to 30 (LLVF…ASAL), 64 to 84 (MFAL…PWAV), and 89 to 109 (LGLL…VGLV).

It belongs to the complex I subunit 3 family. In terms of assembly, NDH-1 can be composed of about 15 different subunits; different subcomplexes with different compositions have been identified which probably have different functions.

It localises to the cellular thylakoid membrane. The enzyme catalyses a plastoquinone + NADH + (n+1) H(+)(in) = a plastoquinol + NAD(+) + n H(+)(out). The catalysed reaction is a plastoquinone + NADPH + (n+1) H(+)(in) = a plastoquinol + NADP(+) + n H(+)(out). In terms of biological role, NDH-1 shuttles electrons from an unknown electron donor, via FMN and iron-sulfur (Fe-S) centers, to quinones in the respiratory and/or the photosynthetic chain. The immediate electron acceptor for the enzyme in this species is believed to be plastoquinone. Couples the redox reaction to proton translocation, and thus conserves the redox energy in a proton gradient. Cyanobacterial NDH-1 also plays a role in inorganic carbon-concentration. This is NAD(P)H-quinone oxidoreductase subunit 3 from Synechococcus sp. (strain JA-3-3Ab) (Cyanobacteria bacterium Yellowstone A-Prime).